A 418-amino-acid chain; its full sequence is MSLSNKLSIEDVDLKGKRVLIRVDFNVPLDAEKKVTNPQRIAGAIPTIKYALDHGAKAVVLMSHLGRPDGKPNPKYSLKPVVPELEKLLGKKVTFAPDCVGPEVEEIVNKADNGEVILLENLRFHIEEEGKGTDAEGNKVKADKAKVEEFRKNLTKLGDVYINDAFGTAHRAHSSMVGIDLPVKAAGFLMKKELQYFAKVLESPQRPFLSILGGAKVSDKIQLIDNLLDKVNTLIVCGGMAFTFKKTLQNMPIGNSLFDEAGAKIVPDLVKKAEKNNVKLVLPVDFTIADKFDKDANTGYATDKDGIPDGWMGLDCGEESVKLFTQAINESQTILWNGPAGVFEFDKFAKGTKATLDACVKAAEEGRTVIIGGGDTATVAAKYGVEDKLSHVSTGGGASLELLEGKALPGVVALSERQ.

Residues valine 23, aspartate 24, phenylalanine 25, asparagine 26, glutamine 39, arginine 40, serine 63, histidine 64, glycine 66, arginine 67, leucine 122, arginine 123, histidine 170, and arginine 171 each contribute to the (2R)-3-phosphoglycerate site. Residue glycine 214 participates in ADP binding. Glycine 214 is a binding site for CDP. AMP contacts are provided by alanine 215 and lysine 216. Alanine 215 is an ATP binding site. Alanine 215 is a binding site for Mg(2+). Aspartate 219 contacts CDP. Residue aspartate 219 coordinates Mg(2+). Lysine 220 is an AMP binding site. ATP is bound at residue lysine 220. An ADP-binding site is contributed by glycine 238. Glycine 238 serves as a coordination point for CDP. Residues glycine 239 and glycine 313 each coordinate AMP. Residues glycine 239 and glycine 313 each contribute to the ATP site. The CDP site is built by glycine 338, alanine 340, and phenylalanine 343. Phenylalanine 343 contributes to the ADP binding site. Glutamate 344 is an AMP binding site. ATP contacts are provided by glutamate 344, aspartate 375, and threonine 376. Aspartate 375 provides a ligand contact to Mg(2+).

The protein belongs to the phosphoglycerate kinase family. Monomer. The cofactor is Mg(2+).

The protein resides in the cytoplasm. Its subcellular location is the mitochondrion. The enzyme catalyses (2R)-3-phosphoglycerate + ATP = (2R)-3-phospho-glyceroyl phosphate + ADP. The protein operates within carbohydrate degradation; glycolysis; pyruvate from D-glyceraldehyde 3-phosphate: step 2/5. Functionally, catalyzes one of the two ATP producing reactions in the glycolytic pathway via the reversible conversion of 1,3-diphosphoglycerate to 3-phosphoglycerate. Both L- and D- forms of purine and pyrimidine nucleotides can be used as substrates, but the activity is much lower on pyrimidines. Negatively regulates the biosynthesis of acetyl-CoA from pyruvate in the mitochondrion. This is Phosphoglycerate kinase (pgk-1) from Neurospora crassa (strain ATCC 24698 / 74-OR23-1A / CBS 708.71 / DSM 1257 / FGSC 987).